Here is a 350-residue protein sequence, read N- to C-terminus: Nicotinate-nucleotide--dimethylbenzimidazole phosphoribosyltransferase (350 aa).

The active-site Proton acceptor is glutamate 316.

Belongs to the CobT family.

It carries out the reaction 5,6-dimethylbenzimidazole + nicotinate beta-D-ribonucleotide = alpha-ribazole 5'-phosphate + nicotinate + H(+). It functions in the pathway nucleoside biosynthesis; alpha-ribazole biosynthesis; alpha-ribazole from 5,6-dimethylbenzimidazole: step 1/2. Catalyzes the synthesis of alpha-ribazole-5'-phosphate from nicotinate mononucleotide (NAMN) and 5,6-dimethylbenzimidazole (DMB). The chain is Nicotinate-nucleotide--dimethylbenzimidazole phosphoribosyltransferase from Bradyrhizobium diazoefficiens (strain JCM 10833 / BCRC 13528 / IAM 13628 / NBRC 14792 / USDA 110).